The sequence spans 116 residues: MRVKRGFKARRRRNKVLKLAKGFRGSRSKLYRTAADAVDKALGYAYRDRRAKKRDFRKLWIARINAASKMNNISYSKLIHGLKLAKVELDRKVLADLAVSDPAGFSQIALKAAAQL.

Belongs to the bacterial ribosomal protein bL20 family.

Functionally, binds directly to 23S ribosomal RNA and is necessary for the in vitro assembly process of the 50S ribosomal subunit. It is not involved in the protein synthesizing functions of that subunit. In Desulforapulum autotrophicum (strain ATCC 43914 / DSM 3382 / VKM B-1955 / HRM2) (Desulfobacterium autotrophicum), this protein is Large ribosomal subunit protein bL20.